Reading from the N-terminus, the 370-residue chain is 3-isopropylmalate dehydrogenase (370 aa).

NAD(+) is bound at residue 77-90 (GPKWDSVPYEVRPE). Residues arginine 97, arginine 107, arginine 135, and aspartate 226 each coordinate substrate. 3 residues coordinate Mg(2+): aspartate 226, aspartate 250, and aspartate 254. 290–302 (GSAPDIAGKGIAN) contacts NAD(+).

Belongs to the isocitrate and isopropylmalate dehydrogenases family. LeuB type 1 subfamily. As to quaternary structure, homodimer. Mg(2+) serves as cofactor. It depends on Mn(2+) as a cofactor.

It is found in the cytoplasm. The catalysed reaction is (2R,3S)-3-isopropylmalate + NAD(+) = 4-methyl-2-oxopentanoate + CO2 + NADH. It functions in the pathway amino-acid biosynthesis; L-leucine biosynthesis; L-leucine from 3-methyl-2-oxobutanoate: step 3/4. Its function is as follows. Catalyzes the oxidation of 3-carboxy-2-hydroxy-4-methylpentanoate (3-isopropylmalate) to 3-carboxy-4-methyl-2-oxopentanoate. The product decarboxylates to 4-methyl-2 oxopentanoate. The polypeptide is 3-isopropylmalate dehydrogenase (Brucella abortus (strain 2308)).